Reading from the N-terminus, the 160-residue chain is Phosphopantetheine adenylyltransferase (160 aa).

Thr-10 contacts substrate. Residues 10–11 and His-18 contribute to the ATP site; that span reads TF. 3 residues coordinate substrate: Lys-42, Leu-74, and Arg-88. ATP is bound by residues 89–91, Glu-99, and 124–130; these read GLR and NSFISST.

Belongs to the bacterial CoaD family. Homohexamer. Mg(2+) serves as cofactor.

It is found in the cytoplasm. The catalysed reaction is (R)-4'-phosphopantetheine + ATP + H(+) = 3'-dephospho-CoA + diphosphate. It functions in the pathway cofactor biosynthesis; coenzyme A biosynthesis; CoA from (R)-pantothenate: step 4/5. Functionally, reversibly transfers an adenylyl group from ATP to 4'-phosphopantetheine, yielding dephospho-CoA (dPCoA) and pyrophosphate. This is Phosphopantetheine adenylyltransferase from Photobacterium damsela subsp. piscicida (Pasteurella piscicida).